We begin with the raw amino-acid sequence, 230 residues long: tRNA (guanine-N(7)-)-methyltransferase (230 aa).

4 residues coordinate S-adenosyl-L-methionine: glutamate 61, glutamate 86, asparagine 113, and aspartate 136. Aspartate 136 is an active-site residue. Residues lysine 140, aspartate 172, and 208 to 211 (TKYE) contribute to the substrate site.

It belongs to the class I-like SAM-binding methyltransferase superfamily. TrmB family.

The catalysed reaction is guanosine(46) in tRNA + S-adenosyl-L-methionine = N(7)-methylguanosine(46) in tRNA + S-adenosyl-L-homocysteine. It participates in tRNA modification; N(7)-methylguanine-tRNA biosynthesis. Its function is as follows. Catalyzes the formation of N(7)-methylguanine at position 46 (m7G46) in tRNA. In Mycobacterium leprae (strain Br4923), this protein is tRNA (guanine-N(7)-)-methyltransferase.